The sequence spans 329 residues: Peroxidase 50 (329 aa).

A signal peptide spans 1–25 (MVVVNKTNLLLLLLSLCLTLDLSSA). 4 disulfides stabilise this stretch: Cys36-Cys119, Cys69-Cys74, Cys125-Cys325, and Cys204-Cys236. The active-site Proton acceptor is the His67. Residues Asp68, Val71, Gly73, Asp75, and Ser77 each coordinate Ca(2+). Pro167 is a substrate binding site. His197 is a heme b binding site. Thr198 is a binding site for Ca(2+). An N-linked (GlcNAc...) asparagine glycan is attached at Asn215. Positions 249, 252, and 257 each coordinate Ca(2+).

The protein belongs to the peroxidase family. Classical plant (class III) peroxidase subfamily. Requires heme b as cofactor. The cofactor is Ca(2+). In terms of tissue distribution, expressed in roots and leaves.

It localises to the secreted. The enzyme catalyses 2 a phenolic donor + H2O2 = 2 a phenolic radical donor + 2 H2O. Removal of H(2)O(2), oxidation of toxic reductants, biosynthesis and degradation of lignin, suberization, auxin catabolism, response to environmental stresses such as wounding, pathogen attack and oxidative stress. These functions might be dependent on each isozyme/isoform in each plant tissue. In terms of biological role, exhibits a Ca(2+)-pectate binding affinity which could be interpreted in vivo as a specificity to interact with the pectic structure of the cell wall. The sequence is that of Peroxidase 50 (PER50) from Arabidopsis thaliana (Mouse-ear cress).